We begin with the raw amino-acid sequence, 187 residues long: Elongation factor P (187 aa).

It belongs to the elongation factor P family.

It is found in the cytoplasm. It functions in the pathway protein biosynthesis; polypeptide chain elongation. In terms of biological role, involved in peptide bond synthesis. Stimulates efficient translation and peptide-bond synthesis on native or reconstituted 70S ribosomes in vitro. Probably functions indirectly by altering the affinity of the ribosome for aminoacyl-tRNA, thus increasing their reactivity as acceptors for peptidyl transferase. The chain is Elongation factor P (efp) from Mycobacterium bovis (strain ATCC BAA-935 / AF2122/97).